The chain runs to 544 residues: Chaperonin GroEL (544 aa).

Residues 29-32 (TLGP), 86-90 (DGTTT), G413, 476-478 (NAA), and D492 contribute to the ATP site.

The protein belongs to the chaperonin (HSP60) family. As to quaternary structure, forms a cylinder of 14 subunits composed of two heptameric rings stacked back-to-back. Interacts with the co-chaperonin GroES.

It is found in the cytoplasm. The enzyme catalyses ATP + H2O + a folded polypeptide = ADP + phosphate + an unfolded polypeptide.. Functionally, together with its co-chaperonin GroES, plays an essential role in assisting protein folding. The GroEL-GroES system forms a nano-cage that allows encapsulation of the non-native substrate proteins and provides a physical environment optimized to promote and accelerate protein folding. The polypeptide is Chaperonin GroEL (Bacillus licheniformis (strain ATCC 14580 / DSM 13 / JCM 2505 / CCUG 7422 / NBRC 12200 / NCIMB 9375 / NCTC 10341 / NRRL NRS-1264 / Gibson 46)).